Reading from the N-terminus, the 368-residue chain is Anhydro-N-acetylmuramic acid kinase (368 aa).

11–18 (GTSLDGID) provides a ligand contact to ATP.

The protein belongs to the anhydro-N-acetylmuramic acid kinase family.

The enzyme catalyses 1,6-anhydro-N-acetyl-beta-muramate + ATP + H2O = N-acetyl-D-muramate 6-phosphate + ADP + H(+). It participates in amino-sugar metabolism; 1,6-anhydro-N-acetylmuramate degradation. The protein operates within cell wall biogenesis; peptidoglycan recycling. In terms of biological role, catalyzes the specific phosphorylation of 1,6-anhydro-N-acetylmuramic acid (anhMurNAc) with the simultaneous cleavage of the 1,6-anhydro ring, generating MurNAc-6-P. Is required for the utilization of anhMurNAc either imported from the medium or derived from its own cell wall murein, and thus plays a role in cell wall recycling. This chain is Anhydro-N-acetylmuramic acid kinase, found in Sulfurimonas denitrificans (strain ATCC 33889 / DSM 1251) (Thiomicrospira denitrificans (strain ATCC 33889 / DSM 1251)).